Here is a 269-residue protein sequence, read N- to C-terminus: MRRTSATLRGRARPRWRAGNTTPVPVNQTGTCAQLHPPPQGTLQVVRGDGTSLGTVLIFHCPSGHQMVGSGLLTCAWNGSTVDWSSGSPVCKAVPPHETFGFKVAVIASIVSCAIILLMSMAFLTCCLLKCVQKNERRRADRTAQLWYQLRGEDLETVQAAYLGLKGHNHNNSSSVGGGNGGPSGGGGKPGIQHSQAHDNHSFTTDPGDIREQAGVTHSVDKDPWTFRMGTPGPGGCSSSPGTYVMVHALNSAGLAPGNPGRPKVYLPG.

Residues 1 to 23 (MRRTSATLRGRARPRWRAGNTTP) are disordered. Topologically, residues 1–103 (MRRTSATLRG…VPPHETFGFK (103 aa)) are extracellular. The Sushi domain occupies 30–93 (GTCAQLHPPP…WSSGSPVCKA (64 aa)). Disulfide bonds link Cys32/Cys75 and Cys61/Cys91. Residues 104–124 (VAVIASIVSCAIILLMSMAFL) traverse the membrane as a helical segment. Residues 125–269 (TCCLLKCVQK…PGRPKVYLPG (145 aa)) are Cytoplasmic-facing. A disordered region spans residues 171 to 237 (NNSSSVGGGN…RMGTPGPGGC (67 aa)). A compositionally biased stretch (gly residues) spans 176–190 (VGGGNGGPSGGGGKP).

It localises to the cell membrane. The protein is Sushi domain-containing protein 3 (Susd3) of Mus musculus (Mouse).